We begin with the raw amino-acid sequence, 420 residues long: Serine hydroxymethyltransferase (420 aa).

(6S)-5,6,7,8-tetrahydrofolate is bound by residues leucine 121 and 125 to 127 (GHL). Lysine 230 is subject to N6-(pyridoxal phosphate)lysine. (6S)-5,6,7,8-tetrahydrofolate-binding positions include glutamate 246 and 354–356 (SPF).

It belongs to the SHMT family. Homodimer. The cofactor is pyridoxal 5'-phosphate.

The protein resides in the cytoplasm. The catalysed reaction is (6R)-5,10-methylene-5,6,7,8-tetrahydrofolate + glycine + H2O = (6S)-5,6,7,8-tetrahydrofolate + L-serine. It functions in the pathway one-carbon metabolism; tetrahydrofolate interconversion. It participates in amino-acid biosynthesis; glycine biosynthesis; glycine from L-serine: step 1/1. Its function is as follows. Catalyzes the reversible interconversion of serine and glycine with tetrahydrofolate (THF) serving as the one-carbon carrier. This reaction serves as the major source of one-carbon groups required for the biosynthesis of purines, thymidylate, methionine, and other important biomolecules. Also exhibits THF-independent aldolase activity toward beta-hydroxyamino acids, producing glycine and aldehydes, via a retro-aldol mechanism. In Rickettsia rickettsii (strain Iowa), this protein is Serine hydroxymethyltransferase.